The primary structure comprises 177 residues: MSRVGKRPVAIASGVTANVEGQTVKVKGPKGTRSFTVHDDVSVELKDNVIRVAPRFETKRAQSLYGTARAQIANLVEGVTKGFEKKLEITGVGYRAALQGKNLQLSLGYSHDVVYPVPEGITITVPKPTEITVAGIDSQRVGQVAAEIRGYRPPEPYKGKGVKYANEFIFRKEGKKK.

The protein belongs to the universal ribosomal protein uL6 family. Part of the 50S ribosomal subunit.

Its function is as follows. This protein binds to the 23S rRNA, and is important in its secondary structure. It is located near the subunit interface in the base of the L7/L12 stalk, and near the tRNA binding site of the peptidyltransferase center. This is Large ribosomal subunit protein uL6 from Afipia carboxidovorans (strain ATCC 49405 / DSM 1227 / KCTC 32145 / OM5) (Oligotropha carboxidovorans).